Consider the following 379-residue polypeptide: Botryococcene C-methyltransferase (379 aa).

Residues 17–37 (LLTWKGAAGLAAAVALGYIII) traverse the membrane as a helical segment.

It belongs to the class I-like SAM-binding methyltransferase superfamily. Erg6/SMT family.

The protein resides in the microsome membrane. The catalysed reaction is C30 botryococcene + 2 S-adenosyl-L-methionine = 3,20-dimethyl-1,2,21,22-tetradehydro-2,3,20,21-tetrahydrobotryococcene + 2 S-adenosyl-L-homocysteine + 2 H(+). In terms of biological role, converts botryococcene to mono- and dimethyl derivatives, but not to tri- and tetramethylated products. Unable to methylate cycloartenol, zymosterol or lanosterol, but can also use squalene as substrate. Methylates both C-3 and C22 positions, but only C-3 position in monomethylated squalenes. In contrast, monomethylated botryococcene occured mainly at the C-20 position yielding showacene, but also at the C-3 position yielding isoshowacene. The chain is Botryococcene C-methyltransferase (TMT-3) from Botryococcus braunii (Green alga).